The following is a 99-amino-acid chain: Malonate decarboxylase acyl carrier protein (99 aa).

S25 bears the O-(phosphoribosyl dephospho-coenzyme A)serine mark.

It belongs to the MdcC family. Post-translationally, covalently binds the prosthetic group of malonate decarboxylase.

The protein localises to the cytoplasm. Its function is as follows. Subunit of malonate decarboxylase, it is an acyl carrier protein to which acetyl and malonyl thioester residues are bound via a 2'-(5''-phosphoribosyl)-3'-dephospho-CoA prosthetic group and turn over during the catalytic mechanism. This chain is Malonate decarboxylase acyl carrier protein, found in Pseudomonas aeruginosa (strain UCBPP-PA14).